We begin with the raw amino-acid sequence, 391 residues long: Pyruvate dehydrogenase E1 component subunit alpha type II, mitochondrial (391 aa).

A mitochondrion-targeting transit peptide spans 1–17; sequence SNIFKGPTVGSSVVAMS. Pyruvate-binding residues include histidine 83, tyrosine 109, arginine 110, glycine 148, glycine 156, valine 158, aspartate 187, glycine 188, alanine 189, asparagine 216, and tyrosine 218. Positions 109 and 110 each coordinate thiamine diphosphate. Residues glycine 156, valine 158, aspartate 187, glycine 188, alanine 189, and asparagine 216 each coordinate thiamine diphosphate. Aspartate 187 contributes to the Mg(2+) binding site. 2 residues coordinate Mg(2+): asparagine 216 and tyrosine 218. Histidine 283 provides a ligand contact to thiamine diphosphate. A phosphoserine mark is found at serine 284 and serine 291.

Heterotetramer of two PDHA2 and two PDHB subunits. The heterotetramer interacts with DLAT, and is part of the multimeric pyruvate dehydrogenase complex that contains multiple copies of pyruvate dehydrogenase (E1), dihydrolipoamide acetyltransferase (DLAT, E2) and lipoamide dehydrogenase (DLD, E3). The cofactor is thiamine diphosphate. Requires Mg(2+) as cofactor.

It localises to the mitochondrion matrix. It carries out the reaction N(6)-[(R)-lipoyl]-L-lysyl-[protein] + pyruvate + H(+) = N(6)-[(R)-S(8)-acetyldihydrolipoyl]-L-lysyl-[protein] + CO2. Its activity is regulated as follows. Pyruvate dehydrogenase activity is inhibited by phosphorylation of PDHA2; it is reactivated by dephosphorylation. Functionally, the pyruvate dehydrogenase complex catalyzes the overall conversion of pyruvate to acetyl-CoA and CO(2), and thereby links the glycolytic pathway to the tricarboxylic cycle. The protein is Pyruvate dehydrogenase E1 component subunit alpha type II, mitochondrial of Ascaris suum (Pig roundworm).